The sequence spans 493 residues: Polyamine aminopropyltransferase 2 (493 aa).

7 helical membrane-spanning segments follow: residues 9–29, 32–52, 68–88, 101–121, 137–157, 161–181, and 188–208; these read LCIF…ATLA, LLGN…LSMG, LAFV…VPIA, VIYG…PLAV, VLEK…YLFL, GLPL…FLLV, and KFLK…AVGH. A spermidine synthase region spans residues 187-448; it reads KKFLKFLAIF…PLNFENFELK (262 aa). The PABS domain occupies 202-437; that stretch reads ATYAVGHKRI…GEWGMVIGSK (236 aa). Gln233 contributes to the S-methyl-5'-thioadenosine binding site. Positions 263 and 287 each coordinate spermidine. S-methyl-5'-thioadenosine-binding positions include Asp306 and 340–341; that span reads DA. Residue Asp358 is the Proton acceptor of the active site.

It belongs to the spermidine/spermine synthase family. Homodimer or homotetramer.

It is found in the cell membrane. It catalyses the reaction S-adenosyl 3-(methylsulfanyl)propylamine + putrescine = S-methyl-5'-thioadenosine + spermidine + H(+). It participates in amine and polyamine biosynthesis; spermidine biosynthesis; spermidine from putrescine: step 1/1. Its function is as follows. Catalyzes the irreversible transfer of a propylamine group from the amino donor S-adenosylmethioninamine (decarboxy-AdoMet) to putrescine (1,4-diaminobutane) to yield spermidine. The protein is Polyamine aminopropyltransferase 2 of Aquifex aeolicus (strain VF5).